A 98-amino-acid polypeptide reads, in one-letter code: NADH-ubiquinone oxidoreductase chain 4L (98 aa).

The next 3 membrane-spanning stretches (helical) occupy residues 1–21, 31–51, and 61–81; these read MSLT…GLLM, LCLE…VLTI, and IILL…LVVV.

This sequence belongs to the complex I subunit 4L family. As to quaternary structure, core subunit of respiratory chain NADH dehydrogenase (Complex I) which is composed of 45 different subunits.

It localises to the mitochondrion inner membrane. It carries out the reaction a ubiquinone + NADH + 5 H(+)(in) = a ubiquinol + NAD(+) + 4 H(+)(out). Its function is as follows. Core subunit of the mitochondrial membrane respiratory chain NADH dehydrogenase (Complex I) which catalyzes electron transfer from NADH through the respiratory chain, using ubiquinone as an electron acceptor. Part of the enzyme membrane arm which is embedded in the lipid bilayer and involved in proton translocation. The polypeptide is NADH-ubiquinone oxidoreductase chain 4L (MT-ND4L) (Chalinolobus tuberculatus (New Zealand long-tailed bat)).